Reading from the N-terminus, the 308-residue chain is D-alanine--D-alanine ligase (308 aa).

One can recognise an ATP-grasp domain in the interval 104–304; it reads KQALVPHGIP…YAELVERIVE (201 aa). 131–187 provides a ligand contact to ATP; sequence LPRPYVLKPVNEGSSVGVAIVRDDSNYGNPISRDALGPWQQFDRLLAEPFIKGRELT. Mg(2+) contacts are provided by Asp255, Glu271, and Asn273.

This sequence belongs to the D-alanine--D-alanine ligase family. The cofactor is Mg(2+). Mn(2+) serves as cofactor.

It localises to the cytoplasm. The catalysed reaction is 2 D-alanine + ATP = D-alanyl-D-alanine + ADP + phosphate + H(+). It participates in cell wall biogenesis; peptidoglycan biosynthesis. Its function is as follows. Cell wall formation. This Sphingopyxis alaskensis (strain DSM 13593 / LMG 18877 / RB2256) (Sphingomonas alaskensis) protein is D-alanine--D-alanine ligase.